A 117-amino-acid polypeptide reads, in one-letter code: MLLLLYICCLFLKFILANVDLTFVEYAKLPSKYAELLANATNQQGVMLFSTGDIRIGAYNYLVNNVTEINNDTDAYLCQLLTGQYTTDCYIFDTNSDDKPETFNSSIHLLNSDLDPK.

The N-terminal stretch at Met-1–Ala-17 is a signal peptide. 4 N-linked (GlcNAc...) asparagine glycosylation sites follow: Asn-39, Asn-65, Asn-71, and Asn-104.

This sequence belongs to the UPF0321 family.

The sequence is that of UPF0321 protein PJ695.01c from Schizosaccharomyces pombe (strain 972 / ATCC 24843) (Fission yeast).